Consider the following 178-residue polypeptide: Ribosome maturation factor RimM (178 aa).

Residues 93-170 (EGSYYYHELR…ALTADAPAGL (78 aa)) form the PRC barrel domain.

The protein belongs to the RimM family. As to quaternary structure, binds ribosomal protein uS19.

The protein localises to the cytoplasm. In terms of biological role, an accessory protein needed during the final step in the assembly of 30S ribosomal subunit, possibly for assembly of the head region. Essential for efficient processing of 16S rRNA. May be needed both before and after RbfA during the maturation of 16S rRNA. It has affinity for free ribosomal 30S subunits but not for 70S ribosomes. The chain is Ribosome maturation factor RimM from Deinococcus geothermalis (strain DSM 11300 / CIP 105573 / AG-3a).